We begin with the raw amino-acid sequence, 130 residues long: Small ribosomal subunit protein uS11 (130 aa).

This sequence belongs to the universal ribosomal protein uS11 family. As to quaternary structure, part of the 30S ribosomal subunit. Interacts with proteins S7 and S18. Binds to IF-3.

Located on the platform of the 30S subunit, it bridges several disparate RNA helices of the 16S rRNA. Forms part of the Shine-Dalgarno cleft in the 70S ribosome. The protein is Small ribosomal subunit protein uS11 of Campylobacter curvus (strain 525.92).